The chain runs to 237 residues: Large ribosomal subunit protein uL2 (237 aa).

The disordered stretch occupies residues 202–237; that stretch reads FGGGNRKHPGKPTTVSRNAPPGRKVGHIAARRTGKR. Over residues 225–237 the composition is skewed to basic residues; that stretch reads KVGHIAARRTGKR.

Belongs to the universal ribosomal protein uL2 family. As to quaternary structure, part of the 50S ribosomal subunit. Forms a bridge to the 30S subunit in the 70S ribosome.

Its function is as follows. One of the primary rRNA binding proteins. Required for association of the 30S and 50S subunits to form the 70S ribosome, for tRNA binding and peptide bond formation. It has been suggested to have peptidyltransferase activity; this is somewhat controversial. Makes several contacts with the 16S rRNA in the 70S ribosome. The protein is Large ribosomal subunit protein uL2 of Methanococcoides burtonii (strain DSM 6242 / NBRC 107633 / OCM 468 / ACE-M).